The sequence spans 1767 residues: MNKGLFEKRCKYSIRKFSLGVASVMIGAAFFGTSPVLADSVQSGSTANLPADLATALATAKENDGRDFEAPKVGEDQGSPEVTDGPKTEEELLALEKEKPAEEKPKEDKPAAAKPETPKTVTPEWQTVANKEQQGTVTIREEKGVRYNQLSSTAQNDNAGKPALFEKKGLTVDANGNATVDLTFKDDSEKGKSRFGVFLKFKDTKNNVFVGYDKDGWFWEYKSPTTSTWYRGSRVAAPETGSTNRLSITLKSDGQLNASNNDVNLFDTVTLPAAVNDHLKNEKKILLKAGSYDDERTVVSVKTDNQEGVKTEDTPAEKETGPEVDDSKVTYDTIQSKVLKAVIDQAFPRVKEYSLNGHTLPGQVQQFNQVFINNHRITPEVTYKKINETTAEYLMKLRDDAHLINAEMTVRLQVVDNQLHFDVTKIVNHNQVTPGQKIDDESKLLSSISFLGNALVSVSSNQTGAKFDGATMSNNTHVSGDDHIDVTNPMKDLAKGYMYGFVSTDKLAAGVWSNSQNSYGGGSNDWTRLTAYKETVGNANYVGIHSSEWQWEKAYKGIVFPEYTKELPSAKVVITEDANADKNVDWQDGAIAYRSIMNNPQGWEKVKDITAYRIAMNFGSQAQNPFLMTLDGIKKINLHTDGLGQGVLLKGYGSEGHDSGHLNYADIGKRIGGVEDFKTLIEKAKKYGAHLGIHVNASETYPESKYFNEKILRKNPDGSYSYGWNWLDQGINIDAAYDLAHGRLARWEDLKKKLGDGLDFIYVDVWGNGQSGDNGAWATHVLAKEINKQGWRFAIEWGHGGEYDSTFHHWAADLTYGGYTNKGINSAITRFIRNHQKDAWVGDYRSYGGAANYPLLGGYSMKDFEGWQGRSDYNGYVTNLFAHDVMTKYFQHFTVSKWENGTPVTMTDNGSTYKWTPEMRVELVDADNNKVVVTRKSNDVNSPQYRERTVTLNGRVIQDGSAYLTPWNWDANGKKLSTDKEKMYYFNTQAGATTWTLPSDWAKSKVYLYKLTDQGKTEEQELTVKDGKITLDLLANQPYVLYRSKQTNPEMSWSEGMHIYDQGFNSGTLKHWTISGDASKAEIVKSQGANDMLRIQGNKEKVSLTQKLTGLKPNTKYAVYVGVDNRSNAKASITVNTGEKEVTTYTNKSLALNYVKAYAHNTRRDNATVDDTSYFQNMYAFFTTGADVSNVTLTLSREAGDQATYFDEIRTFENNSSMYGDKHDTGKGTFKQDFENVAQGIFPFVVGGVEGVEDNRTHLSEKHNPYTQRGWNGKKVDDVIEGNWSLKTNGLVSRRNLVYQTIPQNFRFEAGKTYRVTFEYEAGSDNTYAFVVGKGEFQSGRRGTQASNLEMHELPNTWTDSKKAKKATFLVTGAETGDTWVGIYSTGNASNTRGDSGGNANFRGYNDFMMDNLQIEEITLTGKMLTENALKNYLPTVAMTNYTKESMDALKEAVFNLSQADDDISVEEARAEIAKIEALKNALVQKKTALVADDFASLTAPAQAQEGLANAFDGNVSSLWHTSWNGGDVGKPATMVLKEPTEITGLRYVPRGSGSNGNLRDVKLVVTDESGKEHTFTATDWPNNNKPKDIDFGKTIKAKKIVLTGTKTYGDGGDKYQSAAELIFTRPQVAETPLDLSGYEAALVKAQKLTDKDNQEEVASVQASMKYATDNHLLTERMVEYFADYLNQLKDSATKPDAPTVEKPEFKLRSLASEQGKTPDYKQEIARPETPEQILPATGESQSDTALILASVSLALSALFVVKTKKD.

A signal peptide spans Met-1–Asp-39. Basic and acidic residues-rich tracts occupy residues Lys-61–Glu-75 and Asp-84–Ala-111. 2 disordered regions span residues Lys-61 to Glu-124 and Val-301 to Val-324. The span at Ala-112–Glu-124 shows a compositional bias: low complexity. A compositionally biased stretch (basic and acidic residues) spans Asp-304–Val-324. 5 residues coordinate Ca(2+): Asp-577, Asn-579, Asp-581, Asn-583, and Asp-588. The catalytic stretch occupies residues Gly-602–Phe-893. Residue Asp-658 coordinates substrate. Asp-764 acts as the Nucleophile in catalysis. The active-site Proton donor/acceptor is the Glu-796. Ca(2+) is bound by residues Asp-1233, Glu-1235, Glu-1281, Trp-1284, and Asp-1411. Positions Leu-1711–Thr-1730 are disordered. The segment covering Lys-1717–Thr-1730 has biased composition (basic and acidic residues). Residues Leu-1735–Gly-1739 carry the LPXTG sorting signal motif. A Pentaglycyl murein peptidoglycan amidated threonine modification is found at Thr-1738. A propeptide spans Gly-1739–Asp-1767 (removed by sortase).

The protein belongs to the glycosyl hydrolase 101 family. A subfamily.

The protein resides in the secreted. The protein localises to the cell wall. It carries out the reaction a 3-O-[beta-D-galactosyl-(1-&gt;3)-N-acetyl-alpha-D-galactosaminyl]-L-threonyl-[protein] + H2O = beta-D-galactosyl-(1-&gt;3)-N-acetyl-D-galactosamine + L-threonyl-[protein]. It catalyses the reaction a 3-O-[beta-D-galactosyl-(1-&gt;3)-N-acetyl-alpha-D-galactosaminyl]-L-seryl-[protein] + H2O = beta-D-galactosyl-(1-&gt;3)-N-acetyl-D-galactosamine + L-seryl-[protein]. Its function is as follows. Involved in the breakdown of mucin-type O-linked glycans. Specifically removes the T-antigen disaccharide (Gal-beta-1,3-GalNAc-alpha) from extracellular host glycoproteins. Representative of a broadly important class of virulence factors. This is Endo-alpha-N-acetylgalactosaminidase from Streptococcus pneumoniae serotype 4 (strain ATCC BAA-334 / TIGR4).